A 421-amino-acid polypeptide reads, in one-letter code: UDP-glucuronic acid decarboxylase 1 (421 aa).

At 1-19 the chain is on the cytoplasmic side; that stretch reads MVRTRIQRLLTGINRRMMK. Residues 20 to 40 traverse the membrane as a helical segment; that stretch reads LLIALALIAYVASVWGNFVNM. The Lumenal segment spans residues 41–421; the sequence is SKSIQENGEQ…RVKKGRTRHN (381 aa). NAD(+)-binding residues include G99, F100, V101, D120, N121, F123, T124, G125, D145, and V146. Residues L150 and Y151 each contribute to the UDP-alpha-D-glucuronate site. Positions 160 and 162 each coordinate NAD(+). K178 contacts UDP-alpha-D-glucuronate. T179 lines the NAD(+) pocket. 4 residues coordinate UDP-alpha-D-glucuronate: N186, G189, K192, and R193. Residues A201, Y232, and K236 each contribute to the NAD(+) site. The active-site Proton acceptor is Y232. UDP-alpha-D-glucuronate contacts are provided by Y246, Q249, and E250. NAD(+)-binding residues include T262, H268, and R273. N317 and N386 each carry an N-linked (GlcNAc...) asparagine glycan. The disordered stretch occupies residues 400 to 421; that stretch reads ANNQYIPKPKPARVKKGRTRHN. Over residues 409–421 the composition is skewed to basic residues; it reads KPARVKKGRTRHN.

Belongs to the NAD(P)-dependent epimerase/dehydratase family. UDP-glucuronic acid decarboxylase subfamily. In terms of assembly, homodimer and homotetramer. Requires NAD(+) as cofactor.

It is found in the golgi apparatus. It localises to the golgi stack membrane. The enzyme catalyses UDP-alpha-D-glucuronate + H(+) = UDP-alpha-D-xylose + CO2. It functions in the pathway nucleotide-sugar biosynthesis; UDP-alpha-D-xylose biosynthesis; UDP-alpha-D-xylose from UDP-alpha-D-glucuronate: step 1/1. Functionally, catalyzes the NAD-dependent decarboxylation of UDP-glucuronic acid to UDP-xylose. Necessary for the biosynthesis of the core tetrasaccharide in glycosaminoglycan biosynthesis. This chain is UDP-glucuronic acid decarboxylase 1 (uxs1), found in Xenopus tropicalis (Western clawed frog).